A 411-amino-acid polypeptide reads, in one-letter code: Serine--tRNA ligase (411 aa).

226–228 (TSE) lines the L-serine pocket. 257–259 (RKE) is a binding site for ATP. An L-serine-binding site is contributed by E280. 344–347 (EISS) serves as a coordination point for ATP. S379 lines the L-serine pocket.

Belongs to the class-II aminoacyl-tRNA synthetase family. Type-1 seryl-tRNA synthetase subfamily. In terms of assembly, homodimer. The tRNA molecule binds across the dimer.

The protein localises to the cytoplasm. It carries out the reaction tRNA(Ser) + L-serine + ATP = L-seryl-tRNA(Ser) + AMP + diphosphate + H(+). The enzyme catalyses tRNA(Sec) + L-serine + ATP = L-seryl-tRNA(Sec) + AMP + diphosphate + H(+). It functions in the pathway aminoacyl-tRNA biosynthesis; selenocysteinyl-tRNA(Sec) biosynthesis; L-seryl-tRNA(Sec) from L-serine and tRNA(Sec): step 1/1. In terms of biological role, catalyzes the attachment of serine to tRNA(Ser). Is also able to aminoacylate tRNA(Sec) with serine, to form the misacylated tRNA L-seryl-tRNA(Sec), which will be further converted into selenocysteinyl-tRNA(Sec). The polypeptide is Serine--tRNA ligase (Campylobacter jejuni (strain RM1221)).